Consider the following 359-residue polypeptide: Magnesium transporter NIPA2 (359 aa).

The Extracellular segment spans residues Met1–Asp9. The helical transmembrane segment at Phe10 to Leu30 threads the bilayer. Over Lys31–Glu56 the chain is Cytoplasmic. The chain crosses the membrane as a helical span at residues Trp57–Tyr77. Position 78 (Ala78) is a topological domain, extracellular. Residues Phe79–Leu99 traverse the membrane as a helical segment. The Cytoplasmic segment spans residues Ser100–Arg107. Residues Leu108–Ile128 form a helical membrane-spanning segment. At His129–Pro149 the chain is on the extracellular side. A helical membrane pass occupies residues Gly150–Gly170. Over Pro171–Gln175 the chain is Cytoplasmic. A helical transmembrane segment spans residues Thr176–Val196. Residues Lys197–His215 lie on the Extracellular side of the membrane. Residues Pro216–Leu236 form a helical membrane-spanning segment. Topologically, residues Asn237 to Ser246 are cytoplasmic. A helical membrane pass occupies residues Ile247–Leu267. Residues Phe268 to Asp278 are Extracellular-facing. The helical transmembrane segment at Val279 to Phe299 threads the bilayer. At Lys300 to Phe359 the chain is on the cytoplasmic side.

This sequence belongs to the NIPA family. In terms of tissue distribution, widely expressed. Expressed at high levels in the kidney.

It is found in the cell membrane. Its subcellular location is the early endosome. The enzyme catalyses Mg(2+)(in) = Mg(2+)(out). Functionally, acts as a selective Mg(2+) transporter. The protein is Magnesium transporter NIPA2 (Nipa2) of Mus musculus (Mouse).